We begin with the raw amino-acid sequence, 289 residues long: Glucose and ribitol dehydrogenase homolog 2 (289 aa).

The interval 1-32 (MASGFPPQKQETQPGIQHVMEPTPEFSSSNYK) is disordered. NAD(+) is bound at residue 43 to 67 (LVTGGDSGIGKAVCHCYALEGASVA). Position 180 (S180) interacts with substrate. Y193 (proton acceptor) is an active-site residue.

This sequence belongs to the short-chain dehydrogenases/reductases (SDR) family.

In terms of biological role, may act as a short alcohol-polyol-sugar dehydrogenase possibly related to carbohydrate metabolism and the acquisition of desiccation tolerance. May also be involved in signal transduction. The sequence is that of Glucose and ribitol dehydrogenase homolog 2 from Arabidopsis thaliana (Mouse-ear cress).